The chain runs to 304 residues: tRNA-uridine aminocarboxypropyltransferase 1 (304 aa).

2 disordered regions span residues 1–29 (MALS…QTTS) and 165–193 (RNKA…HEST). A compositionally biased stretch (basic and acidic residues) spans 180–193 (RTTDEEGWDLHEST). The DXTW signature appears at 206 to 209 (DSTW).

The protein belongs to the TDD superfamily. DTWD1 family.

Its subcellular location is the nucleus. The enzyme catalyses a uridine in tRNA + S-adenosyl-L-methionine = a 3-[(3S)-3-amino-3-carboxypropyl]uridine in tRNA + S-methyl-5'-thioadenosine + H(+). In terms of biological role, catalyzes the formation of 3-(3-amino-3-carboxypropyl)uridine (acp3U) at position 20 in the D-loop of several cytoplasmic tRNAs (acp3U(20)). The polypeptide is tRNA-uridine aminocarboxypropyltransferase 1 (Mus musculus (Mouse)).